The sequence spans 289 residues: Lipoyl synthase (289 aa).

Positions 33, 38, 44, 59, 63, 66, and 274 each coordinate [4Fe-4S] cluster. Positions 45-263 constitute a Radical SAM core domain; the sequence is FAGGTATFLI…SQGESELGFL (219 aa).

Belongs to the radical SAM superfamily. Lipoyl synthase family. It depends on [4Fe-4S] cluster as a cofactor.

Its subcellular location is the cytoplasm. It catalyses the reaction [[Fe-S] cluster scaffold protein carrying a second [4Fe-4S](2+) cluster] + N(6)-octanoyl-L-lysyl-[protein] + 2 oxidized [2Fe-2S]-[ferredoxin] + 2 S-adenosyl-L-methionine + 4 H(+) = [[Fe-S] cluster scaffold protein] + N(6)-[(R)-dihydrolipoyl]-L-lysyl-[protein] + 4 Fe(3+) + 2 hydrogen sulfide + 2 5'-deoxyadenosine + 2 L-methionine + 2 reduced [2Fe-2S]-[ferredoxin]. It functions in the pathway protein modification; protein lipoylation via endogenous pathway; protein N(6)-(lipoyl)lysine from octanoyl-[acyl-carrier-protein]: step 2/2. Catalyzes the radical-mediated insertion of two sulfur atoms into the C-6 and C-8 positions of the octanoyl moiety bound to the lipoyl domains of lipoate-dependent enzymes, thereby converting the octanoylated domains into lipoylated derivatives. The protein is Lipoyl synthase of Synechococcus sp. (strain RCC307).